Consider the following 200-residue polypeptide: Probable nicotinate-nucleotide adenylyltransferase (200 aa).

This sequence belongs to the NadD family.

The catalysed reaction is nicotinate beta-D-ribonucleotide + ATP + H(+) = deamido-NAD(+) + diphosphate. It participates in cofactor biosynthesis; NAD(+) biosynthesis; deamido-NAD(+) from nicotinate D-ribonucleotide: step 1/1. In terms of biological role, catalyzes the reversible adenylation of nicotinate mononucleotide (NaMN) to nicotinic acid adenine dinucleotide (NaAD). The sequence is that of Probable nicotinate-nucleotide adenylyltransferase from Lachnoclostridium phytofermentans (strain ATCC 700394 / DSM 18823 / ISDg) (Clostridium phytofermentans).